A 239-amino-acid chain; its full sequence is 7-cyano-7-deazaguanine synthase (239 aa).

13–23 (LSGGQDSATCL) serves as a coordination point for ATP. Residues C199, C214, C217, and C220 each contribute to the Zn(2+) site.

The protein belongs to the QueC family. It depends on Zn(2+) as a cofactor.

It carries out the reaction 7-carboxy-7-deazaguanine + NH4(+) + ATP = 7-cyano-7-deazaguanine + ADP + phosphate + H2O + H(+). It participates in purine metabolism; 7-cyano-7-deazaguanine biosynthesis. Its function is as follows. Catalyzes the ATP-dependent conversion of 7-carboxy-7-deazaguanine (CDG) to 7-cyano-7-deazaguanine (preQ(0)). This Acidovorax ebreus (strain TPSY) (Diaphorobacter sp. (strain TPSY)) protein is 7-cyano-7-deazaguanine synthase.